The following is a 640-amino-acid chain: Transcription factor VHR1 (640 aa).

Residues 118–128 (NVNNSISSNST) are compositionally biased toward low complexity. The segment at 118–139 (NVNNSISSNSTSDDEISPSIYQ) is disordered. Serine 409 carries the post-translational modification Phosphoserine. Positions 580 to 640 (NRISKSPMNE…LPQPVFQPLL (61 aa)) are disordered. Residues 588-608 (NEENSNTTLNTGTSTSNTNNN) are compositionally biased toward low complexity. Positions 621-631 (KNKNSFQNGNL) are enriched in polar residues.

It belongs to the VHR1 family.

It localises to the cytoplasm. The protein resides in the nucleus. Transcription factor that binds to the VHRE consensus sequence in promoters of VHT1 and BIO5, and regulates their biotin-dependent expression. This Saccharomyces cerevisiae (strain ATCC 204508 / S288c) (Baker's yeast) protein is Transcription factor VHR1 (VHR1).